The following is a 419-amino-acid chain: MTTQLEQAWELAKQRFAAVGIDVEEALRQLDRLPVSMHCWQGDDVAGFENPEGSLTGGIQSTGNYPGKARNATELRADLEQALRLIPGPKRLNLHAIYLESDTPVARDQIKPEHFKNWVEWAKANRLGLDFNPTCFSHPLSADGFTLSHPDAKIRQFWIDHCKASRRVSAYFGEQLGTPSVMNIWIPDGMKDITVDRLAPRQRLLEALDEVISEKFDPAHHIDAVESKLFGIGAESYTVGSNEFYMGYATSRQTALCLDAGHFHPTEVISDKISAAMLYVPRLLLHVSRPVRWDSDHVVLLDDETQAIASEIVRHNLFDRVHIGLDFFDASINRVAAWVIGTRNMKKALLRALLEPTDQLRQLEASGDYTVRLALLEEQKSLPWQAVWEMYCQRHDTPTGSQWLDSVRTYEKEILSKRS.

Mn(2+)-binding residues include His262, Asp294, and Asp296.

Belongs to the rhamnose isomerase family. As to quaternary structure, homotetramer. Mn(2+) is required as a cofactor.

Its subcellular location is the cytoplasm. It catalyses the reaction L-rhamnopyranose = L-rhamnulose. It participates in carbohydrate degradation; L-rhamnose degradation; glycerone phosphate from L-rhamnose: step 1/3. Functionally, catalyzes the interconversion of L-rhamnose and L-rhamnulose. This Salmonella enteritidis PT4 (strain P125109) protein is L-rhamnose isomerase.